Here is a 177-residue protein sequence, read N- to C-terminus: Peptide methionine sulfoxide reductase MsrA (177 aa).

C11 is a catalytic residue.

It belongs to the MsrA Met sulfoxide reductase family.

The enzyme catalyses L-methionyl-[protein] + [thioredoxin]-disulfide + H2O = L-methionyl-(S)-S-oxide-[protein] + [thioredoxin]-dithiol. It catalyses the reaction [thioredoxin]-disulfide + L-methionine + H2O = L-methionine (S)-S-oxide + [thioredoxin]-dithiol. In terms of biological role, has an important function as a repair enzyme for proteins that have been inactivated by oxidation. Catalyzes the reversible oxidation-reduction of methionine sulfoxide in proteins to methionine. The protein is Peptide methionine sulfoxide reductase MsrA of Picrophilus torridus (strain ATCC 700027 / DSM 9790 / JCM 10055 / NBRC 100828 / KAW 2/3).